Consider the following 208-residue polypeptide: Uracil phosphoribosyltransferase (208 aa).

5-phospho-alpha-D-ribose 1-diphosphate-binding positions include arginine 78, arginine 103, and 130 to 138; that span reads DPMLATGGS. Uracil-binding positions include isoleucine 193 and 198–200; that span reads GDA. Position 199 (aspartate 199) interacts with 5-phospho-alpha-D-ribose 1-diphosphate.

This sequence belongs to the UPRTase family. The cofactor is Mg(2+).

The enzyme catalyses UMP + diphosphate = 5-phospho-alpha-D-ribose 1-diphosphate + uracil. It functions in the pathway pyrimidine metabolism; UMP biosynthesis via salvage pathway; UMP from uracil: step 1/1. Allosterically activated by GTP. Catalyzes the conversion of uracil and 5-phospho-alpha-D-ribose 1-diphosphate (PRPP) to UMP and diphosphate. This Psychromonas ingrahamii (strain DSM 17664 / CCUG 51855 / 37) protein is Uracil phosphoribosyltransferase.